The sequence spans 584 residues: Probable DNA ligase (584 aa).

Glu248 serves as a coordination point for ATP. Residue Lys250 is the N6-AMP-lysine intermediate of the active site. 6 residues coordinate ATP: Arg255, Arg270, Glu299, Phe339, Arg416, and Lys422.

It belongs to the ATP-dependent DNA ligase family. Mg(2+) is required as a cofactor.

The enzyme catalyses ATP + (deoxyribonucleotide)n-3'-hydroxyl + 5'-phospho-(deoxyribonucleotide)m = (deoxyribonucleotide)n+m + AMP + diphosphate.. DNA ligase that seals nicks in double-stranded DNA during DNA replication, DNA recombination and DNA repair. This is Probable DNA ligase from Aquifex aeolicus (strain VF5).